Reading from the N-terminus, the 309-residue chain is Homoserine O-succinyltransferase (309 aa).

Cys-142 acts as the Acyl-thioester intermediate in catalysis. Substrate is bound by residues Lys-163 and Ser-192. His-235 (proton acceptor) is an active-site residue. Residue Glu-237 is part of the active site. Substrate is bound at residue Arg-249.

Belongs to the MetA family.

It is found in the cytoplasm. The catalysed reaction is L-homoserine + succinyl-CoA = O-succinyl-L-homoserine + CoA. Its pathway is amino-acid biosynthesis; L-methionine biosynthesis via de novo pathway; O-succinyl-L-homoserine from L-homoserine: step 1/1. Functionally, transfers a succinyl group from succinyl-CoA to L-homoserine, forming succinyl-L-homoserine. The chain is Homoserine O-succinyltransferase from Pectobacterium carotovorum subsp. carotovorum (strain PC1).